The following is a 279-amino-acid chain: 4-diphosphocytidyl-2-C-methyl-D-erythritol kinase (279 aa).

Residue Lys-10 is part of the active site. 91 to 101 (PVASGIGGGSA) is an ATP binding site. Asp-130 is an active-site residue.

It belongs to the GHMP kinase family. IspE subfamily.

It carries out the reaction 4-CDP-2-C-methyl-D-erythritol + ATP = 4-CDP-2-C-methyl-D-erythritol 2-phosphate + ADP + H(+). It participates in isoprenoid biosynthesis; isopentenyl diphosphate biosynthesis via DXP pathway; isopentenyl diphosphate from 1-deoxy-D-xylulose 5-phosphate: step 3/6. Its function is as follows. Catalyzes the phosphorylation of the position 2 hydroxy group of 4-diphosphocytidyl-2C-methyl-D-erythritol. The polypeptide is 4-diphosphocytidyl-2-C-methyl-D-erythritol kinase (Ruegeria pomeroyi (strain ATCC 700808 / DSM 15171 / DSS-3) (Silicibacter pomeroyi)).